The following is a 147-amino-acid chain: TRAF-interacting protein with FHA domain-containing protein B (147 aa).

The FHA domain occupies 36-108; that stretch reads LLVGRGQDTH…LHSVNRISFS (73 aa).

In terms of assembly, interacts with TIFA.

Inhibits TIFA-mediated TRAF6 activation possibly by inducing a conformational change in TIFA. The protein is TRAF-interacting protein with FHA domain-containing protein B of Rattus norvegicus (Rat).